Reading from the N-terminus, the 95-residue chain is MENKNLHIIAACGNGMGTSMLIKIKVEKIMKELGYTAKVEALSMGQTKGMEHSADIIISSIHLTSEFNPNAKAKIVGVLNLMDENEIKQALSKVL.

The PTS EIIB type-2 domain occupies 1 to 95 (MENKNLHIIA…EIKQALSKVL (95 aa)). Catalysis depends on cysteine 12, which acts as the Phosphocysteine intermediate. Position 12 is a phosphocysteine (cysteine 12).

The protein localises to the cytoplasm. It carries out the reaction N(pros)-phospho-L-histidyl-[protein] + L-ascorbate(out) = L-ascorbate 6-phosphate(in) + L-histidyl-[protein]. The phosphoenolpyruvate-dependent sugar phosphotransferase system (sugar PTS), a major carbohydrate active transport system, catalyzes the phosphorylation of incoming sugar substrates concomitantly with their translocation across the cell membrane. The enzyme II UlaABC PTS system is involved in ascorbate transport. This Mycoplasma pneumoniae (strain ATCC 29342 / M129 / Subtype 1) (Mycoplasmoides pneumoniae) protein is Ascorbate-specific PTS system EIIB component (ulaB).